Consider the following 379-residue polypeptide: Queuine tRNA-ribosyltransferase (379 aa).

Residue aspartate 93 is the Proton acceptor of the active site. Substrate-binding positions include 93–97 (DSGGF), aspartate 147, glutamine 191, and glycine 218. An RNA binding region spans residues 249-255 (GVGKPED). The Nucleophile role is filled by aspartate 268. The segment at 273–277 (TRNAR) is RNA binding; important for wobble base 34 recognition. Zn(2+) is bound by residues cysteine 306, cysteine 308, cysteine 311, and histidine 337.

This sequence belongs to the queuine tRNA-ribosyltransferase family. Homodimer. Within each dimer, one monomer is responsible for RNA recognition and catalysis, while the other monomer binds to the replacement base PreQ1. It depends on Zn(2+) as a cofactor.

The enzyme catalyses 7-aminomethyl-7-carbaguanine + guanosine(34) in tRNA = 7-aminomethyl-7-carbaguanosine(34) in tRNA + guanine. Its pathway is tRNA modification; tRNA-queuosine biosynthesis. Functionally, catalyzes the base-exchange of a guanine (G) residue with the queuine precursor 7-aminomethyl-7-deazaguanine (PreQ1) at position 34 (anticodon wobble position) in tRNAs with GU(N) anticodons (tRNA-Asp, -Asn, -His and -Tyr). Catalysis occurs through a double-displacement mechanism. The nucleophile active site attacks the C1' of nucleotide 34 to detach the guanine base from the RNA, forming a covalent enzyme-RNA intermediate. The proton acceptor active site deprotonates the incoming PreQ1, allowing a nucleophilic attack on the C1' of the ribose to form the product. After dissociation, two additional enzymatic reactions on the tRNA convert PreQ1 to queuine (Q), resulting in the hypermodified nucleoside queuosine (7-(((4,5-cis-dihydroxy-2-cyclopenten-1-yl)amino)methyl)-7-deazaguanosine). The protein is Queuine tRNA-ribosyltransferase of Actinobacillus succinogenes (strain ATCC 55618 / DSM 22257 / CCUG 43843 / 130Z).